Here is a 347-residue protein sequence, read N- to C-terminus: 3',5'-bisphosphate nucleotidase 2 (347 aa).

The active-site Proton acceptor is D46. The Mg(2+) site is built by E71, D134, I136, and D137. The Proton acceptor role is filled by T139. Adenosine 3',5'-bisphosphate is bound by residues T139, S255, K258, R272, and D284. S255, K258, R272, and D284 together coordinate AMP. D284 serves as a coordination point for Mg(2+).

This sequence belongs to the inositol monophosphatase superfamily. Requires Mg(2+) as cofactor. Very low expression in roots, leaves, stems, flowers and siliques.

It carries out the reaction adenosine 3',5'-bisphosphate + H2O = AMP + phosphate. The enzyme catalyses 3'-phosphoadenylyl sulfate + H2O = adenosine 5'-phosphosulfate + phosphate. The catalysed reaction is 1D-myo-inositol 1,4-bisphosphate + H2O = 1D-myo-inositol 4-phosphate + phosphate. It functions in the pathway signal transduction; phosphatidylinositol signaling pathway. Inhibited by Li(+) (IC(50)=10 mM), Na(+) (IC(50)=200 mM) and Ca(2+) (IC(50)=0.03 mM). Its function is as follows. Phosphatase that converts adenosine 3'-phosphate 5'-phosphosulfate (PAPS) to adenosine 5'-phosphosulfate (APS) and 3'-phosphoadenosine 5'-phosphate (3'-PAP) to AMP. May regulate the flux of sulfur in the sulfur-activation pathway by converting PAPS to APS. Prevents both the toxicity of PAP on RNA processing enzymes as well as the product inhibition by PAP of sulfate conjugation. Is also able to hydrolyze inositol 1,4-bisphosphate. The sequence is that of 3',5'-bisphosphate nucleotidase 2 from Arabidopsis thaliana (Mouse-ear cress).